Consider the following 176-residue polypeptide: MDLPGLIHDFLLVFLGLGLILGGLGVVLLPNPIYSAFSLGLVFVCISLFYILSNSHFVAAAQLLIYVGAINVLIIFAVMFINGSEYSKDFHLWTVGDGITSVVCTSLFVSLITTIPDTSWYGIIWTTKANQIIEQDLISNSQQIGIHLSTDFFLPFEFISIILLVALIGAIAVARQ.

Transmembrane regions (helical) follow at residues Phe-10–Pro-30, Pro-32–Leu-52, Ala-61–Ile-81, Leu-92–Ile-112, and Phe-152–Ala-172.

The protein belongs to the complex I subunit 6 family. As to quaternary structure, NDH is composed of at least 16 different subunits, 5 of which are encoded in the nucleus.

The protein resides in the plastid. Its subcellular location is the chloroplast thylakoid membrane. It carries out the reaction a plastoquinone + NADH + (n+1) H(+)(in) = a plastoquinol + NAD(+) + n H(+)(out). The catalysed reaction is a plastoquinone + NADPH + (n+1) H(+)(in) = a plastoquinol + NADP(+) + n H(+)(out). Its function is as follows. NDH shuttles electrons from NAD(P)H:plastoquinone, via FMN and iron-sulfur (Fe-S) centers, to quinones in the photosynthetic chain and possibly in a chloroplast respiratory chain. The immediate electron acceptor for the enzyme in this species is believed to be plastoquinone. Couples the redox reaction to proton translocation, and thus conserves the redox energy in a proton gradient. This Lactuca sativa (Garden lettuce) protein is NAD(P)H-quinone oxidoreductase subunit 6, chloroplastic (ndhG).